The primary structure comprises 450 residues: Adenylosuccinate lyase (450 aa).

N(6)-(1,2-dicarboxyethyl)-AMP contacts are provided by residues 9-10 (RY), 75-77 (HHD), and 101-102 (TS). The active-site Proton donor/acceptor is the histidine 149. Glutamine 223 is a N(6)-(1,2-dicarboxyethyl)-AMP binding site. The Proton donor/acceptor role is filled by serine 273. N(6)-(1,2-dicarboxyethyl)-AMP contacts are provided by residues serine 274, 279–281 (KRN), and 318–322 (SVERV).

The protein belongs to the lyase 1 family. Adenylosuccinate lyase subfamily. Homotetramer. Residues from neighboring subunits contribute catalytic and substrate-binding residues to each active site.

The catalysed reaction is N(6)-(1,2-dicarboxyethyl)-AMP = fumarate + AMP. It catalyses the reaction (2S)-2-[5-amino-1-(5-phospho-beta-D-ribosyl)imidazole-4-carboxamido]succinate = 5-amino-1-(5-phospho-beta-D-ribosyl)imidazole-4-carboxamide + fumarate. It functions in the pathway purine metabolism; AMP biosynthesis via de novo pathway; AMP from IMP: step 2/2. Its pathway is purine metabolism; IMP biosynthesis via de novo pathway; 5-amino-1-(5-phospho-D-ribosyl)imidazole-4-carboxamide from 5-amino-1-(5-phospho-D-ribosyl)imidazole-4-carboxylate: step 2/2. Catalyzes two reactions in de novo purine nucleotide biosynthesis. Catalyzes the breakdown of 5-aminoimidazole- (N-succinylocarboxamide) ribotide (SAICAR or 2-[5-amino-1-(5-phospho-beta-D-ribosyl)imidazole-4-carboxamido]succinate) to 5-aminoimidazole-4-carboxamide ribotide (AICAR or 5-amino-1-(5-phospho-beta-D-ribosyl)imidazole-4-carboxamide) and fumarate, and of adenylosuccinate (ADS or N(6)-(1,2-dicarboxyethyl)-AMP) to adenosine monophosphate (AMP) and fumarate. This chain is Adenylosuccinate lyase (purB), found in Pyrococcus horikoshii (strain ATCC 700860 / DSM 12428 / JCM 9974 / NBRC 100139 / OT-3).